Reading from the N-terminus, the 103-residue chain is Auxin-responsive protein SAUR50 (103 aa).

This sequence belongs to the ARG7 family.

In terms of biological role, effector of hormonal and environmental signals in plant growth. Involved in heliotropism. This Helianthus annuus (Common sunflower) protein is Auxin-responsive protein SAUR50.